A 580-amino-acid polypeptide reads, in one-letter code: MPGWPWGLLLTAGTLFAALSPGPPAPADPCHDEGGAPRGCVPGLVNAALGREVLASSTCGRPATRACDASDPRRAHSPALLTSPGGTASPLCWRSESLPRAPLNVTLTVPLGKAFELVFVSLRFCSAPPASVALLKSQDHGRSWAPLGFFSSHCDLDYGRLPAPANGPAGPGPEALCFPAPLAQPDGSGLLAFSMQDSSPPGLDLDSSPVLQDWVTATDVRVVLTRPSTAGDPRDMEAVVPYSYAATDLQVGGRCKCNGHASRCLLDTQGHLICDCRHGTEGPDCGRCKPFYCDRPWQRATARESHACLACSCNGHARRCRFNMELYRLSGRRSGGVCLNCRHNTAGRHCHYCREGFYRDPGRALSDRRACRACDCHPVGAAGKTCNQTTGQCPCKDGVTGLTCNRCAPGFQQSRSPVAPCVKTPIPGPTEDSSPVQPQDCDSHCKPARGSYRISLKKFCKKDYAVQVAVGARGEARGAWTRFPVAVLAVFRSGEERARRGSSALWVPAGDAACGCPRLLPGRRYLLLGGGPGAAAGGAGGRGPGLIAARGSLVLPWRDAWTRRLRRLQRRERRGRCSAA.

The N-terminal stretch at 1-27 (MPGWPWGLLLTAGTLFAALSPGPPAPA) is a signal peptide. The Laminin N-terminal domain maps to 36–254 (APRGCVPGLV…AATDLQVGGR (219 aa)). The disordered stretch occupies residues 62-83 (PATRACDASDPRRAHSPALLTS). 15 disulfide bridges follow: Cys-92–Cys-125, Cys-255–Cys-264, Cys-257–Cys-274, Cys-276–Cys-285, Cys-288–Cys-308, Cys-311–Cys-320, Cys-313–Cys-338, Cys-341–Cys-350, Cys-353–Cys-371, Cys-374–Cys-386, Cys-376–Cys-393, Cys-395–Cys-404, Cys-407–Cys-421, Cys-441–Cys-514, and Cys-460–Cys-577. Asn-104 is a glycosylation site (N-linked (GlcNAc...) asparagine). Laminin EGF-like domains are found at residues 255–308 (CKCN…SHAC), 311–371 (CSCN…RRAC), and 374–421 (CDCH…VAPC). Asn-387 is a glycosylation site (N-linked (GlcNAc...) asparagine). Residues 441 to 577 (CDSHCKPARG…LQRRERRGRC (137 aa)) enclose the NTR domain. The Cell attachment site; atypical motif lies at 500 to 502 (RGS).

Spinal cord.

Its subcellular location is the secreted. The protein resides in the extracellular space. It localises to the extracellular matrix. Netrins control guidance of CNS commissural axons and peripheral motor axons. The chain is Netrin-3 (NTN3) from Homo sapiens (Human).